Reading from the N-terminus, the 450-residue chain is Tubulin alpha chain (450 aa).

The MREC motif signature appears at 1–4 (MREC). Glutamine 11 serves as a coordination point for GTP. Lysine 40 is modified (N6-acetyllysine). 7 residues coordinate GTP: glutamate 71, serine 140, glycine 144, threonine 145, threonine 179, asparagine 206, and asparagine 228. Glutamate 71 is a binding site for Mg(2+). The active site involves glutamate 254. A 5-glutamyl polyglutamate modification is found at glutamate 444.

It belongs to the tubulin family. As to quaternary structure, dimer of alpha and beta chains. A typical microtubule is a hollow water-filled tube with an outer diameter of 25 nm and an inner diameter of 15 nM. Alpha-beta heterodimers associate head-to-tail to form protofilaments running lengthwise along the microtubule wall with the beta-tubulin subunit facing the microtubule plus end conferring a structural polarity. Microtubules usually have 13 protofilaments but different protofilament numbers can be found in some organisms and specialized cells. Mg(2+) is required as a cofactor. In terms of processing, some glutamate residues at the C-terminus are polyglycylated, resulting in polyglycine chains on the gamma-carboxyl group. Glycylation is mainly limited to tubulin incorporated into axonemes (cilia and flagella) whereas glutamylation is prevalent in neuronal cells, centrioles, axonemes, and the mitotic spindle. Both modifications can coexist on the same protein on adjacent residues, and lowering polyglycylation levels increases polyglutamylation, and reciprocally. The precise function of polyglycylation is still unclear. Some glutamate residues at the C-terminus are polyglutamylated, resulting in polyglutamate chains on the gamma-carboxyl group. Polyglutamylation plays a key role in microtubule severing by spastin (SPAST). SPAST preferentially recognizes and acts on microtubules decorated with short polyglutamate tails: severing activity by SPAST increases as the number of glutamates per tubulin rises from one to eight, but decreases beyond this glutamylation threshold. Post-translationally, acetylation of alpha chains at Lys-40 is located inside the microtubule lumen. This modification has been correlated with increased microtubule stability, intracellular transport and ciliary assembly. In terms of processing, undergoes a tyrosination/detyrosination cycle, the cyclic removal and re-addition of a C-terminal tyrosine residue by the enzymes tubulin tyrosine carboxypeptidase (MATCAP, VASH1 or VASH2) and tubulin tyrosine ligase (TTL), respectively. Tyrosination promotes microtubule interaction with CAP-Gly microtubule plus-end tracking proteins. Tyrosinated tubulins regulate the initiation of dynein-driven motility. Post-translationally, detyrosination is involved in metaphase plate congression by guiding chromosomes during mitosis. Detyrosination increases microtubules-dependent mechanotransduction in dystrophic cardiac and skeletal muscle. In cardiomyocytes, detyrosinated microtubules are required to resist to contractile compression during contraction.

It is found in the cytoplasm. The protein localises to the cytoskeleton. The enzyme catalyses GTP + H2O = GDP + phosphate + H(+). In terms of biological role, tubulin is the major constituent of microtubules, a cylinder consisting of laterally associated linear protofilaments composed of alpha- and beta-tubulin heterodimers. Microtubules grow by the addition of GTP-tubulin dimers to the microtubule end, where a stabilizing cap forms. Below the cap, tubulin dimers are in GDP-bound state, owing to GTPase activity of alpha-tubulin. The polypeptide is Tubulin alpha chain (Notophthalmus viridescens (Eastern newt)).